The sequence spans 210 residues: Uracil phosphoribosyltransferase (210 aa).

Residues Arg-78, Arg-103, and 130-138 contribute to the 5-phospho-alpha-D-ribose 1-diphosphate site; that span reads DPMLATGGS. Uracil-binding positions include Ile-193 and 198–200; that span reads GDA. Position 199 (Asp-199) interacts with 5-phospho-alpha-D-ribose 1-diphosphate.

The protein belongs to the UPRTase family. The cofactor is Mg(2+).

The enzyme catalyses UMP + diphosphate = 5-phospho-alpha-D-ribose 1-diphosphate + uracil. It participates in pyrimidine metabolism; UMP biosynthesis via salvage pathway; UMP from uracil: step 1/1. With respect to regulation, allosterically activated by GTP. Catalyzes the conversion of uracil and 5-phospho-alpha-D-ribose 1-diphosphate (PRPP) to UMP and diphosphate. This is Uracil phosphoribosyltransferase from Chromobacterium violaceum (strain ATCC 12472 / DSM 30191 / JCM 1249 / CCUG 213 / NBRC 12614 / NCIMB 9131 / NCTC 9757 / MK).